A 431-amino-acid polypeptide reads, in one-letter code: DNA polymerase delta subunit 3 (431 aa).

The segment at 64–80 is necessary for function, possibly resulting from its inability to interact with PolD2; that stretch reads QGSDSGEDLYSVVLESR. The segment at 128–431 is disordered; it reads PGAGKIVPSA…AGIMNFFSKK (304 aa). A compositionally biased stretch (low complexity) spans 156 to 171; sequence SKSAVKLEPSKSSLKS. 2 stretches are compositionally biased toward basic and acidic residues: residues 172 to 200 and 252 to 271; these read EPAKSKAEKPVASKSSPEDKKTSPKEQAS and SPPESEDKSKKDASNSNKKE. Low complexity predominate over residues 278–290; it reads PSPTKKPTTANTS. A compositionally biased stretch (acidic residues) spans 294 to 307; sequence FDEESAESSDEEEK. 2 stretches are compositionally biased toward basic and acidic residues: residues 308 to 328 and 343 to 362; these read LDMLRRKVIESDNDSDQEKAS and QPPKKSADEETIALDEKMDT. A compositionally biased stretch (low complexity) spans 387-411; the sequence is PANKKVSPKAAAPVNKKKSPPSAAK.

Component of both the DNA polymerase delta and DNA polymerase zeta complexes. The DNA polymerase delta complex consists of three subunits: the catalytic subunit PolD1 and two accessory subunits PolD2/Pol31 and PolD3/Pol32. Within the delta complex, interacts with both PolD1 and PolD2. Component of the DNA polymerase zeta complex consisting of four subunits: the catalytic subunit PolZ1 and three accessory subunits PolZ2/Rev7, PolD2/Pol31 and PolD3/Pol32. In terms of tissue distribution, expressed in ovaries (at the protein level). Expressed in ovaries.

The protein resides in the nucleus. The protein localises to the nucleoplasm. Accessory component of the DNA polymerase delta complex and possibly the DNA polymerase zeta complex. As a component of the delta complex, participates in high fidelity genome replication, including lagging strand synthesis, DNA recombination and repair. Required to recruit the DNA polymerase delta complex to the nucleus of rapidly dividing embryonic cells, and as a consequence is essential for genome replication during the earliest cell cycles. Increases the efficiency and processivity of DNA synthesis of the DNA polymerases during mitotic DNA replication and repair. During development this function is essential for preventing replication stress that results in the formation of chromosomal fragile sites (CFS) such as chromosomal breaks. Ensures genomic stability by promoting several types of DNA repair mechanisms including repairing broken dicentric chromosomes through homolog-dependent break-induced replication (BIR). During homologous recombination (HR) repair, required for maintaining the processivity of the delta complex during break-induced replication; a form of HR that requires extensive DNA synthesis such as the repair of large gaps. Able to suppress position effect variegation and may therefore have a role in the induction of chromatin state changes that likely include its activities in DNA replication and repair. In Drosophila melanogaster (Fruit fly), this protein is DNA polymerase delta subunit 3.